The primary structure comprises 372 residues: Alanine racemase (372 aa).

Lys37 acts as the Proton acceptor; specific for D-alanine in catalysis. Lys37 carries the N6-(pyridoxal phosphate)lysine modification. Arg136 contributes to the substrate binding site. The active-site Proton acceptor; specific for L-alanine is the Tyr265. Met313 is a binding site for substrate.

Belongs to the alanine racemase family. Pyridoxal 5'-phosphate serves as cofactor.

The enzyme catalyses L-alanine = D-alanine. It participates in amino-acid biosynthesis; D-alanine biosynthesis; D-alanine from L-alanine: step 1/1. Functionally, catalyzes the interconversion of L-alanine and D-alanine. May also act on other amino acids. The sequence is that of Alanine racemase (alr) from Synechocystis sp. (strain ATCC 27184 / PCC 6803 / Kazusa).